Reading from the N-terminus, the 459-residue chain is MKDFFRMRTAQQPATRHWRHTVAPGGLPLAGHALLMARKPLQFLASLPAHGDLVELRLGPRPVYLPCHPELVQQVLVNARVYDTGGPVKEKAKPILGNGLITSDWADHRRQRRLVQPAFHTARIAKYAEVMERECEAESTAWTARRPIDVSHEMLALTARVTARALFSTDMAPHAVAEIQHCLPIVVEGAYRQAIDPTGLLAKLPLAANRRFDDALARLNQLIDRMIDDYKASDDGDRGDVLSALFAAQDDETGGTMSDQEIHDQVMTLLLAGIETTASALTWAWFLLGRNPGAEAALHAEVDEVLGGRAPRYADVPRLAYTQRVFSEALRLFPPAWLFTRTTTETTELGGRRLPPASDVLISPYVLHRDPALFPRPDSFDPDRWLPERAKEVTRGSYLPFGGGSRKCIGDVFGMTEATLALAAIAGRWRMRPIPGTKIRPRPQMSLTAGPLRMIPEPR.

A heme-binding site is contributed by cysteine 408.

Belongs to the cytochrome P450 family. Heme serves as cofactor.

The catalysed reaction is cyclooctat-9-ene-5,7-diol + AH2 + O2 = cyclooctatin + A + H2O. In terms of biological role, involved in the biosynthesis of cyclooctatin, a potent inhibitor of lysophospholipase. Catalyzes the hydroxylation of cyclooctat-9-ene-5,7-diol at C-18 to yield the final product, cyclooctatin. The polypeptide is Cyclooctatin synthase (Streptomyces melanosporofaciens).